The following is a 165-amino-acid chain: MMQALGQGHIDADTYAQVLRRHHRLLAGFEEQLSDWLVTLVGSGWQYRRRVPALREDLRVLGQPVDAAVPPPASSEAARWGMLYVIEGSQLGGRVIARMLRKRQPGLAHALHYFELADEDPAGWRRFQAVLEQRLQSAAARADAIAGAQAMFAHFHTCLAAEARP.

It belongs to the heme oxygenase family.

It catalyses the reaction heme b + 3 reduced [NADPH--hemoprotein reductase] + 3 O2 = biliverdin IXalpha + CO + Fe(2+) + 3 oxidized [NADPH--hemoprotein reductase] + 3 H2O + H(+). Functionally, catalyzes the opening of the heme ring to form the open-chain tetrapyrrole biliverdin IX with the release of iron and carbon monoxide (CO). In Xanthomonas campestris pv. campestris (strain 8004), this protein is Heme oxygenase (bphO).